A 686-amino-acid polypeptide reads, in one-letter code: MSILNQAINLYKNKNYRQALSLFEKVAEIYDVSWVEANIKLCQTALNLSEEVDKLNRKAVIDIDAATKIMCSNAKAISLNEVEKNEIISKYREITAKKSERAELKEVEPIPLDWPSDLTLPPLPESTNDYVWAGKRKELDDYPRKQLIIDGLSIVIPTYNRAKILAITLACLCNQKTIYDYEVIVADDGSKENIEEIVREFESLLNIKYVRQKDYGYQLCAVRNLGLRAAKYNYVAILDCDMAPNPLWVQSYMELLAVDDNVALIGPRKYIDTSKHTYLDFLSQKSLINEIPEIITNNQVAGKVEQNKSVDWRIEHFKNTDNLRLCNTPFRFFSGGNVAFAKKWLFRAGWFDEEFTHWGGEDNEFGYRLYREGCYFRSVEGAMAYHQEPPGKENETDRAAGKNITVQLLQQKVPYFYRKKEKIESATLKRVPLVSIYIPAYNCSKYIVRCVESALNQTITDLEVCICDDGSTDDTLRILQEHYANHPRVRFISQKNKGIGSASNTAVRLCRGFYIGQLDSDDFLEPDAVELCLDEFRKDLSLACVYTTNRNIDREGNLISNGYNWPIYSREKLTSAMICHHFRMFTARAWNLTEGFNESISNAVDYDMYLKLSEVGPFKHINKICYNRVLHGENTSIKKLDIQKENHFKVVNESLSRLGIKKYKYSPLTNLNECRKYTWEKIENDL.

The galactosaminyltransferase; A1 domain stretch occupies residues 130–417 (YVWAGKRKEL…LLQQKVPYFY (288 aa)). UDP-N-acetyl-alpha-D-galactosamine-binding positions include Pro-157, Arg-161, Asp-188, Tyr-217, Arg-223, and 239–240 (DC). Residue Asp-241 participates in Mn(2+) binding. UDP-N-acetyl-alpha-D-galactosamine is bound at residue 361–362 (ED). His-386 is a Mn(2+) binding site. The tract at residues 418 to 682 (RKKEKIESAT…ECRKYTWEKI (265 aa)) is glucuronosyltransferase; A2 domain. UDP-alpha-D-glucuronate is bound by residues Tyr-441, Asp-469, and 517 to 520 (QLDS). Residue Asp-521 coordinates Mn(2+). Residues His-581 and 603–604 (AV) each bind UDP-alpha-D-glucuronate. A Mn(2+)-binding site is contributed by His-631.

This sequence belongs to the glycosyltransferase 2 family. CS/HAS subfamily. The cofactor is Mn(2+).

It carries out the reaction 3-O-(beta-D-GlcA-(1-&gt;3)-beta-D-GalNAc-(1-&gt;4)-beta-D-GlcA-(1-&gt;3)-beta-D-Gal-(1-&gt;3)-beta-D-Gal-(1-&gt;4)-beta-D-Xyl)-L-seryl-[protein] + UDP-N-acetyl-alpha-D-galactosamine = 3-O-(beta-D-GalNAc-(1-&gt;4)-beta-D-GlcA-(1-&gt;3)-beta-D-GalNAc-(1-&gt;4)-beta-D-GlcA-(1-&gt;3)-beta-D-Gal-(1-&gt;3)-beta-D-Gal-(1-&gt;4)-beta-D-Xyl)-L-seryl-[protein] + UDP + H(+). The enzyme catalyses 3-O-{beta-D-GlcA-(1-&gt;3)-[beta-D-GalNAc-(1-&gt;4)-beta-D-GlcA-(1-&gt;3)](n)-beta-D-GalNAc-(1-&gt;4)-beta-D-GlcA-(1-&gt;3)-beta-D-Gal-(1-&gt;3)-beta-D-Gal-(1-&gt;4)-beta-D-Xyl}-L-seryl-[protein] + UDP-N-acetyl-alpha-D-galactosamine = 3-O-{[beta-D-GalNAc-(1-&gt;4)-beta-D-GlcA-(1-&gt;3)](n+1)-beta-D-GalNAc-(1-&gt;4)-beta-D-GlcA-(1-&gt;3)-beta-D-Gal-(1-&gt;3)-beta-D-Gal-(1-&gt;4)-beta-D-Xyl}-L-seryl-[protein] + UDP + H(+). It catalyses the reaction 3-O-(beta-D-GalNAc-(1-&gt;4)-beta-D-GlcA-(1-&gt;3)-beta-D-Gal-(1-&gt;3)-beta-D-Gal-(1-&gt;4)-beta-D-Xyl)-L-seryl-[protein] + UDP-alpha-D-glucuronate = 3-O-(beta-D-GlcA-(1-&gt;3)-beta-D-GalNAc-(1-&gt;4)-beta-D-GlcA-(1-&gt;3)-beta-D-Gal-(1-&gt;3)-beta-D-Gal-(1-&gt;4)-beta-D-Xyl)-L-seryl-[protein] + UDP + H(+). The catalysed reaction is 3-O-{[beta-D-GalNAc-(1-&gt;4)-beta-D-GlcA-(1-&gt;3)](n)-beta-D-GalNAc-(1-&gt;4)-beta-D-GlcA-(1-&gt;3)-beta-D-Gal-(1-&gt;3)-beta-D-Gal-(1-&gt;4)-beta-D-Xyl}-L-seryl-[protein] + UDP-alpha-D-glucuronate = 3-O-{beta-D-GlcA-(1-&gt;3)-[beta-D-GalNAc-(1-&gt;4)-beta-D-GlcA-(1-&gt;3)](n)-beta-D-GalNAc-(1-&gt;4)-beta-D-GlcA-(1-&gt;3)-beta-D-Gal-(1-&gt;3)-beta-D-Gal-(1-&gt;4)-beta-D-Xyl}-L-seryl-[protein] + UDP + H(+). Functionally, glycosyltransferase that catalyzes elongation of chondroitin, a polysaccharide composed of a repeating disaccharide of N-acetylgalactosamine (GalNAc) and glucuronic acid (GlcUA) units, by alternatively transferring the GlcUA and GalNAc moiety from UDP-GlcUA and UDP-GalNAc to the non-reducing ends of the chondroitin chain. Each chondroitin unit has the composition beta-(1-&gt;4)-GlcUA-beta-(1-&gt;3)-GalNAc. The polypeptide is Chondroitin synthase (kfoC) (Escherichia coli).